Consider the following 83-residue polypeptide: CLAVATA3/ESR (CLE)-related protein 3 (83 aa).

Positions 1–24 (MASLKLWVCLVLLLVLELTSVHEC) are cleaved as a signal peptide. The stretch at 38 to 58 (RLKKIRRELFERLKEMKGRSE) forms a coiled coil. The interval 53-83 (MKGRSEGEETILGNTLDSKRLSPGGPDPRHH) is disordered. Hydroxyproline is present on residues proline 75 and proline 78. Proline 78 carries O-linked (Ara...) hydroxyproline glycosylation.

This sequence belongs to the CLV3/ESR signal peptide family. The O-glycosylation (arabinosylation) of the hydroxyproline Pro-78 enhances binding affinity of the CLE3p peptide for its receptor. Mostly expressed in roots, stems and apex, and, to a lower extent, in seedlings, leaves, flowers, siliques and pollen.

The protein localises to the secreted. Its subcellular location is the extracellular space. Its function is as follows. Extracellular signal peptide that regulates cell fate. This is CLAVATA3/ESR (CLE)-related protein 3 from Arabidopsis thaliana (Mouse-ear cress).